A 753-amino-acid chain; its full sequence is Pesticidal crystal protein Cry20Aa (753 aa).

Over residues 680–696 (DTTYQPSYDNYNQNASG) the composition is skewed to polar residues. The interval 680 to 721 (DTTYQPSYDNYNQNASGTYDDGYNPNASDSYDQSYTNNYSQN) is disordered. The segment covering 712-721 (QSYTNNYSQN) has biased composition (low complexity).

It belongs to the delta endotoxin family. Post-translationally, has low mosquitocidal activity probably due to rapid proteolysis to inactive 56 kDa and 43 kDa proteins.

Its function is as follows. Promotes colloidosmotic lysis by binding to the midgut epithelial cells of mosquitos. Active against Aedes aegypti and Culex quinquefasciatus larvae. The sequence is that of Pesticidal crystal protein Cry20Aa (cry20Aa) from Bacillus thuringiensis subsp. fukuokaensis.